Consider the following 101-residue polypeptide: MYLGISGRSPYGSSVAVACQLPNINISGQIYLLLPPSEYINIGFNTRQWQYHCHWRPKFTCPKGKEAVAVPLPLKFICPKGTSCQLPIFIYSEVYLYASEY.

It localises to the plastid. The protein localises to the chloroplast. This is an uncharacterized protein from Chlamydomonas reinhardtii (Chlamydomonas smithii).